The chain runs to 195 residues: ATP-dependent Clp protease proteolytic subunit (195 aa).

The Nucleophile role is filled by Ser98. Residue His123 is part of the active site.

The protein belongs to the peptidase S14 family. In terms of assembly, fourteen ClpP subunits assemble into 2 heptameric rings which stack back to back to give a disk-like structure with a central cavity, resembling the structure of eukaryotic proteasomes.

Its subcellular location is the cytoplasm. The catalysed reaction is Hydrolysis of proteins to small peptides in the presence of ATP and magnesium. alpha-casein is the usual test substrate. In the absence of ATP, only oligopeptides shorter than five residues are hydrolyzed (such as succinyl-Leu-Tyr-|-NHMec, and Leu-Tyr-Leu-|-Tyr-Trp, in which cleavage of the -Tyr-|-Leu- and -Tyr-|-Trp bonds also occurs).. Cleaves peptides in various proteins in a process that requires ATP hydrolysis. Has a chymotrypsin-like activity. Plays a major role in the degradation of misfolded proteins. This is ATP-dependent Clp protease proteolytic subunit from Helicobacter pylori (strain J99 / ATCC 700824) (Campylobacter pylori J99).